A 517-amino-acid polypeptide reads, in one-letter code: T-complex protein 11-like protein 2 (517 aa).

Positions 1–59 (MPFNGEKQCVSEDQQSDSESSRFAEGVASLSDYECSRQSFTSDSSSKSSSPASTSPPRG) are disordered. S16 is subject to Phosphoserine. A compositionally biased stretch (low complexity) spans 36 to 55 (SRQSFTSDSSSKSSSPASTS).

It belongs to the TCP11 family. In terms of assembly, interacts with FMNL2; this interaction promotes muscle-derived satellite cell (MDSC) migration and differentiation.

Its subcellular location is the cytoplasm. It localises to the cytoskeleton. Functionally, promotes the migration of muscle-derived satellite cells (MDSCs) during differentiation throught interaction with FMNL2 and therefore may participate in microfilament assembly. This is T-complex protein 11-like protein 2 from Mus musculus (Mouse).